We begin with the raw amino-acid sequence, 391 residues long: Processive diacylglycerol beta-glucosyltransferase (391 aa).

Belongs to the glycosyltransferase 28 family. UgtP subfamily.

It is found in the cell membrane. The enzyme catalyses a 1,2-diacyl-3-O-(beta-D-glucopyranosyl)-sn-glycerol + UDP-alpha-D-glucose = a 1,2-diacyl-3-O-(beta-D-Glc-(1-&gt;6)-beta-D-Glc)-sn-glycerol + UDP + H(+). It carries out the reaction a 1,2-diacyl-sn-glycerol + UDP-alpha-D-glucose = a 1,2-diacyl-3-O-(beta-D-glucopyranosyl)-sn-glycerol + UDP + H(+). Its pathway is glycolipid metabolism; diglucosyl-diacylglycerol biosynthesis. In terms of biological role, processive glucosyltransferase involved in the biosynthesis of both the bilayer- and non-bilayer-forming membrane glucolipids. Is able to successively transfer two glucosyl residues to diacylglycerol (DAG), thereby catalyzing the formation of beta-monoglucosyl-DAG (3-O-(beta-D-glucopyranosyl)-1,2-diacyl-sn-glycerol) and beta-diglucosyl-DAG (3-O-(beta-D-glucopyranosyl-beta-(1-&gt;6)-D-glucopyranosyl)-1,2-diacyl-sn-glycerol). Beta-diglucosyl-DAG is the predominant glycolipid found in Bacillales and is also used as a membrane anchor for lipoteichoic acid (LTA). This is Processive diacylglycerol beta-glucosyltransferase from Staphylococcus aureus (strain MW2).